Reading from the N-terminus, the 228-residue chain is 7-cyano-7-deazaguanine synthase (228 aa).

Residue 8–18 coordinates ATP; sequence LSGGLDSTTCL. Positions 188, 198, 201, and 204 each coordinate Zn(2+).

This sequence belongs to the QueC family. It depends on Zn(2+) as a cofactor.

It carries out the reaction 7-carboxy-7-deazaguanine + NH4(+) + ATP = 7-cyano-7-deazaguanine + ADP + phosphate + H2O + H(+). It functions in the pathway purine metabolism; 7-cyano-7-deazaguanine biosynthesis. In terms of biological role, catalyzes the ATP-dependent conversion of 7-carboxy-7-deazaguanine (CDG) to 7-cyano-7-deazaguanine (preQ(0)). The polypeptide is 7-cyano-7-deazaguanine synthase (Legionella pneumophila subsp. pneumophila (strain Philadelphia 1 / ATCC 33152 / DSM 7513)).